The chain runs to 1017 residues: Multiple C2 domain and transmembrane region protein 14 (1017 aa).

In terms of domain architecture, C2 1 spans methionine 1 to tyrosine 110. The disordered stretch occupies residues alanine 139–proline 231. A compositionally biased stretch (low complexity) spans proline 141–alanine 153. Residues threonine 154–aspartate 213 show a composition bias toward basic and acidic residues. Residues alanine 217–proline 231 show a composition bias toward pro residues. C2 domains are found at residues aspartate 258–tyrosine 387, aspartate 420–phenylalanine 554, and valine 587–tyrosine 714. Aspartate 296, asparagine 299, aspartate 352, threonine 355, and glutamate 359 together coordinate Ca(2+). Helical transmembrane passes span valine 851–isoleucine 871 and alanine 957–phenylalanine 977.

The protein belongs to the MCTP family. The cofactor is Ca(2+). In terms of tissue distribution, expressed in incipient leaf primordia and in roots meristems. Observed in flowers.

It is found in the membrane. It localises to the vesicle. The protein localises to the golgi apparatus membrane. May function as a signaling molecule by regulating the trafficking of other regulators. The polypeptide is Multiple C2 domain and transmembrane region protein 14 (Arabidopsis thaliana (Mouse-ear cress)).